Reading from the N-terminus, the 556-residue chain is Formate--tetrahydrofolate ligase (556 aa).

Residue 65-72 (TPAGEGKS) coordinates ATP.

The protein belongs to the formate--tetrahydrofolate ligase family.

The enzyme catalyses (6S)-5,6,7,8-tetrahydrofolate + formate + ATP = (6R)-10-formyltetrahydrofolate + ADP + phosphate. It participates in one-carbon metabolism; tetrahydrofolate interconversion. The chain is Formate--tetrahydrofolate ligase from Streptococcus thermophilus (strain ATCC BAA-250 / LMG 18311).